Here is a 235-residue protein sequence, read N- to C-terminus: MQKQEKIIEMFNQIAPTYDKANRILSFGADVVWRKKACQRVMSLYLKKDLKIADIACGTGDMIEIWQESALKMEKNILNIKGIDPSSGMLNVAKEKFPNVEFIEAGAQNLPLESQSLDILSISYGIRNVVERQKALSEFARVLQKGGILVVLEFTKREKGGFIAACRDFYLKNILPSIGGIISKNKSAYEYLPNSIEGFLSKEEFILELKNAGFEMLDYKSFSFGVSSMFIAKKL.

Residues Thr59, Asp84, and Ser123 each coordinate S-adenosyl-L-methionine.

It belongs to the class I-like SAM-binding methyltransferase superfamily. MenG/UbiE family.

It carries out the reaction a 2-demethylmenaquinol + S-adenosyl-L-methionine = a menaquinol + S-adenosyl-L-homocysteine + H(+). It catalyses the reaction a 2-methoxy-6-(all-trans-polyprenyl)benzene-1,4-diol + S-adenosyl-L-methionine = a 5-methoxy-2-methyl-3-(all-trans-polyprenyl)benzene-1,4-diol + S-adenosyl-L-homocysteine + H(+). It participates in quinol/quinone metabolism; menaquinone biosynthesis; menaquinol from 1,4-dihydroxy-2-naphthoate: step 2/2. Its pathway is cofactor biosynthesis; ubiquinone biosynthesis. In terms of biological role, methyltransferase required for the conversion of demethylmenaquinol (DMKH2) to menaquinol (MKH2) and the conversion of 2-polyprenyl-6-methoxy-1,4-benzoquinol (DDMQH2) to 2-polyprenyl-3-methyl-6-methoxy-1,4-benzoquinol (DMQH2). The protein is Ubiquinone/menaquinone biosynthesis C-methyltransferase UbiE of Campylobacter jejuni subsp. jejuni serotype O:6 (strain 81116 / NCTC 11828).